A 91-amino-acid chain; its full sequence is Putative regulatory protein Tlet_1629 (91 aa).

This sequence belongs to the RemA family.

This is Putative regulatory protein Tlet_1629 from Pseudothermotoga lettingae (strain ATCC BAA-301 / DSM 14385 / NBRC 107922 / TMO) (Thermotoga lettingae).